A 522-amino-acid polypeptide reads, in one-letter code: MKKYQFLKSNLLQNQNINELFLQYLKNDSNIGVIKSIVDGVVIIEGLSNVKAGEMLQFSNDIQGMALNLNSETVSAVLFGDETKIKPGEYVEGTGNIISVPVGMSLLGRVVNALGQPIDNKGDFPGSELKQVEVKAPGIITRQSVNEPMITGVKAIDCLVPVGRGQRELVIGDRQTGKTSICLDAVLNQKYENSKNKKNALYCIYTAIGQKRSSISKLVTLLEKTNSLEYSIIVAATASEAAPLQYLAPYTGCVIGEYFRDNGKHALIIYDDLSKQAVAYRQMSLLLRRPPGREAYPGDIFYLHSRLLERAAKLNKNFGGGSLTALPVVETQAGDVSAYIPTNVISITDGQIFLETNLFYNGIRPAVNVGLSVSRVGSAAQILAIKKLAGSLKLELAQYREALSFAQFGSDLDETTKNLLSRGNMLTELLNQNRFTPIPIENQFVLMYSGIKGFLTNVNNKVIRSYENELFNRISNYSVFNTNVILLSNNEYYKKKNNNNVVAFFISYFKFITTNIFGFSAK.

G172–T179 serves as a coordination point for ATP.

Belongs to the ATPase alpha/beta chains family. F-type ATPases have 2 components, CF(1) - the catalytic core - and CF(0) - the membrane proton channel. CF(1) has five subunits: alpha(3), beta(3), gamma(1), delta(1), epsilon(1). CF(0) has three main subunits: a, b and c.

It localises to the mitochondrion. It is found in the mitochondrion inner membrane. Mitochondrial membrane ATP synthase (F(1)F(0) ATP synthase or Complex V) produces ATP from ADP in the presence of a proton gradient across the membrane which is generated by electron transport complexes of the respiratory chain. F-type ATPases consist of two structural domains, F(1) - containing the extramembraneous catalytic core, and F(0) - containing the membrane proton channel, linked together by a central stalk and a peripheral stalk. During catalysis, ATP synthesis in the catalytic domain of F(1) is coupled via a rotary mechanism of the central stalk subunits to proton translocation. Subunits alpha and beta form the catalytic core in F(1). Rotation of the central stalk against the surrounding alpha(3)beta(3) subunits leads to hydrolysis of ATP in three separate catalytic sites on the beta subunits. Subunit alpha does not bear the catalytic high-affinity ATP-binding sites. This chain is ATP synthase subunit alpha, mitochondrial (ATP1), found in Acanthamoeba castellanii (Amoeba).